Consider the following 122-residue polypeptide: Acidic phospholipase A2 (122 aa).

7 disulfide bridges follow: Cys26/Cys115, Cys28/Cys44, Cys43/Cys95, Cys49/Cys122, Cys50/Cys88, Cys57/Cys81, and Cys75/Cys86. 3 residues coordinate Ca(2+): Tyr27, Gly29, and Gly31. His47 is an active-site residue. Asp48 lines the Ca(2+) pocket. Asp89 is an active-site residue.

It belongs to the phospholipase A2 family. Group II subfamily. D49 sub-subfamily. In terms of assembly, monomer. Ca(2+) serves as cofactor. As to expression, expressed by the venom gland.

It is found in the secreted. The catalysed reaction is a 1,2-diacyl-sn-glycero-3-phosphocholine + H2O = a 1-acyl-sn-glycero-3-phosphocholine + a fatty acid + H(+). Its function is as follows. PLA2 catalyzes the calcium-dependent hydrolysis of the 2-acyl groups in 3-sn-phosphoglycerides. The sequence is that of Acidic phospholipase A2 from Gloydius blomhoffii (Mamushi).